The chain runs to 614 residues: UvrABC system protein C (614 aa).

Residues 14 to 91 (TSPGCYIHKD…IKENKPKYNI (78 aa)) enclose the GIY-YIG domain. The UVR domain maps to 196–231 (DKIIDDLKSKMAVAAQSMEFERAAEYRDLIQAIGTL). The tract at residues 595-614 (LSQVAEERVDYQTEGNHNEP) is disordered. Over residues 599–614 (AEERVDYQTEGNHNEP) the composition is skewed to basic and acidic residues.

The protein belongs to the UvrC family. As to quaternary structure, interacts with UvrB in an incision complex.

It is found in the cytoplasm. Its function is as follows. The UvrABC repair system catalyzes the recognition and processing of DNA lesions. UvrC both incises the 5' and 3' sides of the lesion. The N-terminal half is responsible for the 3' incision and the C-terminal half is responsible for the 5' incision. This is UvrABC system protein C from Streptococcus pneumoniae serotype 2 (strain D39 / NCTC 7466).